The primary structure comprises 226 residues: Enolase-phosphatase E1 (226 aa).

Belongs to the HAD-like hydrolase superfamily. MasA/MtnC family. In terms of assembly, monomer. Mg(2+) serves as cofactor.

The catalysed reaction is 5-methylsulfanyl-2,3-dioxopentyl phosphate + H2O = 1,2-dihydroxy-5-(methylsulfanyl)pent-1-en-3-one + phosphate. It participates in amino-acid biosynthesis; L-methionine biosynthesis via salvage pathway; L-methionine from S-methyl-5-thio-alpha-D-ribose 1-phosphate: step 3/6. It functions in the pathway amino-acid biosynthesis; L-methionine biosynthesis via salvage pathway; L-methionine from S-methyl-5-thio-alpha-D-ribose 1-phosphate: step 4/6. In terms of biological role, bifunctional enzyme that catalyzes the enolization of 2,3-diketo-5-methylthiopentyl-1-phosphate (DK-MTP-1-P) into the intermediate 2-hydroxy-3-keto-5-methylthiopentenyl-1-phosphate (HK-MTPenyl-1-P), which is then dephosphorylated to form the acireductone 1,2-dihydroxy-3-keto-5-methylthiopentene (DHK-MTPene). The protein is Enolase-phosphatase E1 of Shewanella pealeana (strain ATCC 700345 / ANG-SQ1).